Here is a 293-residue protein sequence, read N- to C-terminus: 4-hydroxy-tetrahydrodipicolinate synthase (293 aa).

Thr45 is a pyruvate binding site. Tyr133 functions as the Proton donor/acceptor in the catalytic mechanism. Lys161 (schiff-base intermediate with substrate) is an active-site residue. Residue Ile204 coordinates pyruvate.

It belongs to the DapA family. As to quaternary structure, homotetramer; dimer of dimers.

It is found in the cytoplasm. The catalysed reaction is L-aspartate 4-semialdehyde + pyruvate = (2S,4S)-4-hydroxy-2,3,4,5-tetrahydrodipicolinate + H2O + H(+). The protein operates within amino-acid biosynthesis; L-lysine biosynthesis via DAP pathway; (S)-tetrahydrodipicolinate from L-aspartate: step 3/4. In terms of biological role, catalyzes the condensation of (S)-aspartate-beta-semialdehyde [(S)-ASA] and pyruvate to 4-hydroxy-tetrahydrodipicolinate (HTPA). The chain is 4-hydroxy-tetrahydrodipicolinate synthase from Edwardsiella ictaluri (strain 93-146).